We begin with the raw amino-acid sequence, 496 residues long: UDP-N-acetylmuramoyl-L-alanyl-D-glutamate--2,6-diaminopimelate ligase (496 aa).

Serine 32 contributes to the UDP-N-acetyl-alpha-D-muramoyl-L-alanyl-D-glutamate binding site. Residue 116–122 coordinates ATP; the sequence is GTNGKTT. UDP-N-acetyl-alpha-D-muramoyl-L-alanyl-D-glutamate is bound by residues 158–159, serine 185, glutamine 191, and arginine 193; that span reads TT. Lysine 225 carries the post-translational modification N6-carboxylysine. Meso-2,6-diaminopimelate contacts are provided by residues arginine 389, 413-416, glycine 464, and glutamate 468; that span reads DNPR. The Meso-diaminopimelate recognition motif signature appears at 413–416; the sequence is DNPR.

This sequence belongs to the MurCDEF family. MurE subfamily. Requires Mg(2+) as cofactor. In terms of processing, carboxylation is probably crucial for Mg(2+) binding and, consequently, for the gamma-phosphate positioning of ATP.

The protein localises to the cytoplasm. The enzyme catalyses UDP-N-acetyl-alpha-D-muramoyl-L-alanyl-D-glutamate + meso-2,6-diaminopimelate + ATP = UDP-N-acetyl-alpha-D-muramoyl-L-alanyl-gamma-D-glutamyl-meso-2,6-diaminopimelate + ADP + phosphate + H(+). It participates in cell wall biogenesis; peptidoglycan biosynthesis. In terms of biological role, catalyzes the addition of meso-diaminopimelic acid to the nucleotide precursor UDP-N-acetylmuramoyl-L-alanyl-D-glutamate (UMAG) in the biosynthesis of bacterial cell-wall peptidoglycan. The chain is UDP-N-acetylmuramoyl-L-alanyl-D-glutamate--2,6-diaminopimelate ligase from Nostoc sp. (strain PCC 7120 / SAG 25.82 / UTEX 2576).